Here is a 499-residue protein sequence, read N- to C-terminus: Cytochrome P450 2M1 (499 aa).

Cys-441 serves as a coordination point for heme.

It belongs to the cytochrome P450 family. It depends on heme as a cofactor. In kidney and in liver from juvenile and sexually mature trout from both sexes.

Its subcellular location is the endoplasmic reticulum membrane. The protein localises to the microsome membrane. It carries out the reaction an organic molecule + reduced [NADPH--hemoprotein reductase] + O2 = an alcohol + oxidized [NADPH--hemoprotein reductase] + H2O + H(+). Has (omega-6)-hydroxylation activity toward lauric acid. The sequence is that of Cytochrome P450 2M1 (cyp2m1) from Oncorhynchus mykiss (Rainbow trout).